The following is a 2114-amino-acid chain: Protein CELLULOSE SYNTHASE INTERACTIVE 2 (2114 aa).

42 ARM repeats span residues 2–42 (TSEM…LLGL), 46–87 (KKEC…VLCK), 89–128 (KNVR…EVSL), 135–177 (NVGT…NLCG), 180–219 (DGFW…RLIR), 222–262 (TSSI…AITS), 265–305 (EEAI…SYGT), 354–394 (GDTR…SLFG), 396–435 (VDLS…NLCK), 479–519 (EESR…NLCC), 522–561 (EEIR…KLIK), 563–595 (ADPS…HVLA), 601–640 (EFVT…DLFS), 643–682 (KDLC…SLSN), 708–750 (AKTN…RVLR), 774–816 (SDVF…LLAK), 825–865 (HNPF…RFCK), 870–910 (LLGR…CAAK), 914–953 (TLWA…IQRP), 994–1033 (PSNR…KWIA), 1044–1083 (PKVV…ALVR), 1087–1128 (DKTI…LVQN), 1141–1182 (ERVR…RIAD), 1185–1225 (DLSK…SLFR), 1227–1264 (PEIT…LCEL), 1265–1304 (FSSE…ALVK), 1312–1353 (RPDI…FLFT), 1355–1394 (EGLR…RLLD), 1396–1435 (KRFV…KMAK), 1454–1494 (ISQL…MVQP), 1496–1525 (LLIL…KPMV), 1526–1564 (LESL…SLLE), 1566–1605 (QRFQ…RSSV), 1606–1648 (TWPK…NILR), 1650–1689 (NPEH…ENQD), 1690–1730 (SSSV…RNPK), 1732–1771 (RETK…DISQ), 1772–1813 (HEGL…NFAM), 1816–1855 (RTSR…SLFS), 1857–1898 (HTLQ…TILT), 1901–1940 (PKLR…TLRQ), and 1949–1993 (TARS…CLPG). The 114-residue stretch at 1974-2087 (SPAPSSFHER…LSEGSYSGIF (114 aa)) folds into the C2 domain.

Associates with cellulase synthase (CESA) complexes. Binds to cortical microtubules.

The protein resides in the cell membrane. It is found in the cytoplasm. The protein localises to the cytoskeleton. In terms of biological role, regulator of the microtubular cytoskeleton. Microtubule-associated protein involved in the association of cellulase synthase (CESA) complexes (CSCs) and cortical microtubules. Promotes dynamics of CSCs in the plasma membrane. Regulates primary cell wall biosynthesis and cellulose microfibrils organization. The sequence is that of Protein CELLULOSE SYNTHASE INTERACTIVE 2 from Arabidopsis thaliana (Mouse-ear cress).